The primary structure comprises 257 residues: Pyridoxine 5'-phosphate synthase (257 aa).

Residue Asn-6 coordinates 3-amino-2-oxopropyl phosphate. Position 8-9 (8-9) interacts with 1-deoxy-D-xylulose 5-phosphate; the sequence is DH. 3-amino-2-oxopropyl phosphate is bound at residue Arg-17. The active-site Proton acceptor is the His-42. Residues Arg-44 and His-49 each coordinate 1-deoxy-D-xylulose 5-phosphate. The active-site Proton acceptor is Glu-69. Thr-99 is a binding site for 1-deoxy-D-xylulose 5-phosphate. Residue His-211 is the Proton donor of the active site. Residues Gly-212 and 233-234 contribute to the 3-amino-2-oxopropyl phosphate site; that span reads GQ.

The protein belongs to the PNP synthase family. In terms of assembly, homooctamer; tetramer of dimers.

It is found in the cytoplasm. The enzyme catalyses 3-amino-2-oxopropyl phosphate + 1-deoxy-D-xylulose 5-phosphate = pyridoxine 5'-phosphate + phosphate + 2 H2O + H(+). It functions in the pathway cofactor biosynthesis; pyridoxine 5'-phosphate biosynthesis; pyridoxine 5'-phosphate from D-erythrose 4-phosphate: step 5/5. In terms of biological role, catalyzes the complicated ring closure reaction between the two acyclic compounds 1-deoxy-D-xylulose-5-phosphate (DXP) and 3-amino-2-oxopropyl phosphate (1-amino-acetone-3-phosphate or AAP) to form pyridoxine 5'-phosphate (PNP) and inorganic phosphate. In Campylobacter hominis (strain ATCC BAA-381 / DSM 21671 / CCUG 45161 / LMG 19568 / NCTC 13146 / CH001A), this protein is Pyridoxine 5'-phosphate synthase.